A 787-amino-acid chain; its full sequence is Filamentous growth regulator 27 (787 aa).

The interval Met1 to Asp22 is disordered. The zn(2)-C6 fungal-type DNA-binding region spans Cys31–Cys57. A coiled-coil region spans residues Gly69–Ser97. Disordered stretches follow at residues Ser120 to Pro140 and Arg200 to Ile221. The segment covering Asp209–Ile221 has biased composition (polar residues).

It is found in the nucleus. Its function is as follows. Transcription factor involved in yeast cell adherence to silicone substrate, filamentous growth, and biofilm formation. This chain is Filamentous growth regulator 27 (FGR27), found in Candida albicans (strain SC5314 / ATCC MYA-2876) (Yeast).